Here is a 230-residue protein sequence, read N- to C-terminus: Endonuclease NucS (230 aa).

It belongs to the NucS endonuclease family.

Its subcellular location is the cytoplasm. Cleaves both 3' and 5' ssDNA extremities of branched DNA structures. This is Endonuclease NucS from Corynebacterium glutamicum (strain R).